Here is a 138-residue protein sequence, read N- to C-terminus: MAQAKKGGTAAKKGQKTRRREKKNVPHGAAHIKSTFNNTIVSITDPQGNVIAWASSGHVGFKGSRKSTPFAAQLAAENAARKAQEHGVKKVDVFVKGPGSGRETAIRSLQAAGLEVGTISDVTPQPHNGCRPPKRRRV.

The segment covering 1-12 (MAQAKKGGTAAK) has biased composition (low complexity). Disordered stretches follow at residues 1-32 (MAQAKKGGTAAKKGQKTRRREKKNVPHGAAHI) and 119-138 (ISDVTPQPHNGCRPPKRRRV). A compositionally biased stretch (basic residues) spans 13–22 (KGQKTRRREK).

The protein belongs to the universal ribosomal protein uS11 family. In terms of assembly, part of the 30S ribosomal subunit. Interacts with proteins S7 and S18. Binds to IF-3.

Its function is as follows. Located on the platform of the 30S subunit, it bridges several disparate RNA helices of the 16S rRNA. Forms part of the Shine-Dalgarno cleft in the 70S ribosome. The polypeptide is Small ribosomal subunit protein uS11 (Mycolicibacterium smegmatis (strain ATCC 700084 / mc(2)155) (Mycobacterium smegmatis)).